A 241-amino-acid polypeptide reads, in one-letter code: Proteasome subunit beta type-6 (241 aa).

A propeptide spanning residues 1–19 (MATIASEYSSEASNTPIEH) is cleaved from the precursor.

This sequence belongs to the peptidase T1B family. As to quaternary structure, the 26S proteasome consists of a 20S proteasome core and two 19S regulatory subunits. The 20S proteasome core is composed of 28 subunits that are arranged in four stacked rings, resulting in a barrel-shaped structure. The two end rings are each formed by seven alpha subunits, and the two central rings are each formed by seven beta subunits. The catalytic chamber with the active sites is on the inside of the barrel.

Its subcellular location is the cytoplasm. It is found in the nucleus. Non-catalytic component of the proteasome which degrades poly-ubiquitinated proteins in the cytoplasm and in the nucleus. It is essential for the regulated turnover of proteins and for the removal of misfolded proteins. The proteasome is a multicatalytic proteinase complex that is characterized by its ability to cleave peptides with Arg, Phe, Tyr, Leu, and Glu adjacent to the leaving group at neutral or slightly basic pH. It has an ATP-dependent proteolytic activity. This is Proteasome subunit beta type-6 (PRE7) from Saccharomyces cerevisiae (strain ATCC 204508 / S288c) (Baker's yeast).